A 784-amino-acid chain; its full sequence is LPS-assembly protein LptD (784 aa).

An N-terminal signal peptide occupies residues 1–24 (MKKRIPTLLATMIATALYSQQGLA). Intrachain disulfides connect cysteine 31-cysteine 724 and cysteine 173-cysteine 725.

Belongs to the LptD family. Component of the lipopolysaccharide transport and assembly complex. Interacts with LptE and LptA. In terms of processing, contains two intramolecular disulfide bonds.

Its subcellular location is the cell outer membrane. Its function is as follows. Together with LptE, is involved in the assembly of lipopolysaccharide (LPS) at the surface of the outer membrane. The protein is LPS-assembly protein LptD of Shigella flexneri.